The primary structure comprises 1142 residues: DNA-directed RNA polymerase subunit beta N-terminal section (1142 aa).

It belongs to the RNA polymerase beta chain family. As to quaternary structure, in plastids the minimal PEP RNA polymerase catalytic core is composed of four subunits: alpha, beta, beta', and beta''. When a (nuclear-encoded) sigma factor is associated with the core the holoenzyme is formed, which can initiate transcription.

The protein resides in the plastid. It is found in the chloroplast. It carries out the reaction RNA(n) + a ribonucleoside 5'-triphosphate = RNA(n+1) + diphosphate. Functionally, DNA-dependent RNA polymerase catalyzes the transcription of DNA into RNA using the four ribonucleoside triphosphates as substrates. The polypeptide is DNA-directed RNA polymerase subunit beta N-terminal section (rpoB1) (Pleurastrum terricola (Filamentous green alga)).